The chain runs to 377 residues: MGISQVHYCNGDQNLEANLLDHEETESFSVPQTKNCKRWLRVSIYAIFVIFCQPLATVLGRLYYENGGKSTYVVTLLQLIGFPVLILFRFFSRIRQPKSTDTNFSQSPSFTTLASVYLCTGLLVSAYAYLSAVGLLYLPVSTFSLILASQLAFTAFFSYFLNSQKFTPLIVNSLFLLTVSSALLVVNTDSENTTNVSRVQYVIGFICTIGASAGIGLVLSLIQLLFRKVFTKHTSSAVLDLANYQSLVATCVVLIGLFASGEWRTLPSEMRNYKLGKVSYILTLASAAIFWQVYTVGCVGLIFESSSVFSNSITAVGLPIVPVVAVIVFHDKMDASKIFSIILAIWGFLSFVYQHYLDEKKLKTCQTKPVEEETQTL.

A run of 10 helical transmembrane segments spans residues tryptophan 39–leucine 59, threonine 71–phenylalanine 91, serine 107–tyrosine 127, alanine 128–alanine 148, phenylalanine 166–valine 186, valine 202–isoleucine 222, valine 238–phenylalanine 258, threonine 283–phenylalanine 303, phenylalanine 309–phenylalanine 329, and isoleucine 338–aspartate 358.

This sequence belongs to the purine permeases (TC 2.A.7.14) family.

It is found in the membrane. The sequence is that of Probable purine permease 22 (PUP22) from Arabidopsis thaliana (Mouse-ear cress).